Reading from the N-terminus, the 124-residue chain is Aspartate 1-decarboxylase (124 aa).

Ser25 functions as the Schiff-base intermediate with substrate; via pyruvic acid in the catalytic mechanism. Position 25 is a pyruvic acid (Ser) (Ser25). Thr57 is a substrate binding site. The Proton donor role is filled by Tyr58. Position 73-75 (73-75 (GAA)) interacts with substrate.

It belongs to the PanD family. Heterooctamer of four alpha and four beta subunits. It depends on pyruvate as a cofactor. In terms of processing, is synthesized initially as an inactive proenzyme, which is activated by self-cleavage at a specific serine bond to produce a beta-subunit with a hydroxyl group at its C-terminus and an alpha-subunit with a pyruvoyl group at its N-terminus.

The protein localises to the cytoplasm. The catalysed reaction is L-aspartate + H(+) = beta-alanine + CO2. Its pathway is cofactor biosynthesis; (R)-pantothenate biosynthesis; beta-alanine from L-aspartate: step 1/1. Functionally, catalyzes the pyruvoyl-dependent decarboxylation of aspartate to produce beta-alanine. This Clostridium beijerinckii (strain ATCC 51743 / NCIMB 8052) (Clostridium acetobutylicum) protein is Aspartate 1-decarboxylase.